The sequence spans 88 residues: CLAVATA3/ESR (CLE)-related protein 42 (88 aa).

The signal sequence occupies residues 1-24 (MRSPHITISLVFLFFLFLIIQTHQ). The interval 69–88 (KMIGANEHGVPSGPNPISNR) is disordered. Hydroxyproline is present on residues P79 and P82. An O-linked (Ara...) hydroxyproline glycan is attached at P82.

Belongs to the CLV3/ESR signal peptide family. In terms of processing, the O-glycosylation (arabinosylation) of the hydroxyproline Pro-82 enhances binding affinity of the CLE42p peptide for its receptor. As to expression, expressed at low levels in seedlings, roots and inflorescence.

The protein localises to the secreted. The protein resides in the extracellular space. Its function is as follows. Extracellular signal peptide that regulates cell fate. Represses tracheary element differentiation but promotes the formation of procambial cells. The sequence is that of CLAVATA3/ESR (CLE)-related protein 42 from Arabidopsis thaliana (Mouse-ear cress).